Reading from the N-terminus, the 726-residue chain is Probable dipeptidyl-peptidase 5 (726 aa).

The N-terminal stretch at 1 to 19 (MAAAKWLIASLAFASSGLA) is a signal peptide. 2 N-linked (GlcNAc...) asparagine glycosylation sites follow: asparagine 96 and asparagine 252. A disordered region spans residues 269–291 (AEPINKRNGPRTPQGIEGASSSP). Asparagine 485 carries an N-linked (GlcNAc...) asparagine glycan. Catalysis depends on serine 558, which acts as the Charge relay system. N-linked (GlcNAc...) asparagine glycosylation is present at asparagine 605. Active-site charge relay system residues include aspartate 641 and histidine 673. Asparagine 699 is a glycosylation site (N-linked (GlcNAc...) asparagine).

This sequence belongs to the peptidase S9C family.

The protein resides in the secreted. In terms of biological role, extracellular dipeptidyl-peptidase which removes N-terminal dipeptides sequentially from polypeptides having unsubstituted N-termini. Contributes to pathogenicity. The chain is Probable dipeptidyl-peptidase 5 (DPP5) from Arthroderma benhamiae (strain ATCC MYA-4681 / CBS 112371) (Trichophyton mentagrophytes).